The chain runs to 155 residues: Troponin C, body wall muscle (155 aa).

Val-1 carries the N-acetylvaline modification. EF-hand domains are found at residues 7-43 (DEKSQFRAAFDIFVADAKDGTISSKELGKVMKMLGQN), 44-79 (PTEKDLQEMIEEVDIDGSGTIDFEEFCLMMYRQMQA), 88-121 (REEKELSEAFRLFDLDGDGIGDELKAALDGTGEN), and 122-155 (VETWEVDEMMADGDKNHDSQIDYEEWVTMMKFVQ). The Ca(2+) site is built by Asp-57, Asp-59, Ser-61, Thr-63, and Glu-68. Residues Asp-135, Asn-137, Asp-139, Gln-141, and Glu-146 each contribute to the Ca(2+) site.

Belongs to the troponin C family.

Its function is as follows. Troponin is the central regulatory protein of muscle contraction. Tn consists of three components: Tn-I which is the inhibitor of actomyosin ATPase, Tn-T which contains the binding site for tropomyosin and Tn-C. The binding of calcium to Tn-C abolishes the inhibitory action of Tn on actin filaments. The chain is Troponin C, body wall muscle from Halocynthia roretzi (Sea squirt).